Consider the following 335-residue polypeptide: E3 ubiquitin ligase rnf-121 (335 aa).

The Cytoplasmic segment spans residues 1-47 (MGQHGAIRLQNEVQEGMPPPHELTEEEQWAEEHRKMHEKHKGHEAMH). Residues 48-68 (MEMMVIFMISVIVGQIFLVTW) traverse the membrane as a helical segment. The Lumenal portion of the chain corresponds to 69 to 72 (KRKH). Residues 73 to 93 (FKSYQMCTLIGMLTIPVYVCF) form a helical membrane-spanning segment. Topologically, residues 94–99 (NRSWYR) are cytoplasmic. The chain crosses the membrane as a helical span at residues 100 to 120 (FLATWLVFCIFSAFIWLKASA). Over 121–143 (QHISGGTPRFVYKWFLFLHKLSY) the chain is Lumenal. Residues 144–164 (VLGVVGYLIMMGALLGFHVLF) traverse the membrane as a helical segment. The Cytoplasmic portion of the chain corresponds to 165–168 (GVSQ). The helical transmembrane segment at 169–189 (PTLMDAGILFMFYGVYYGVLG) threads the bilayer. The Lumenal segment spans residues 190 to 335 (RDFAHICTAR…QGLTTWMGLE (146 aa)). The RING-type; atypical zinc-finger motif lies at 222 to 284 (CAVCGGRLDD…GKLQTCPYCK (63 aa)).

It belongs to the RNF121 family. Expressed in body wall muscles, the hypodermis, seam cells, vulval cells, spermathecal cells, uterine cells and the distal tip cell (at protein level).

It is found in the endoplasmic reticulum membrane. The protein resides in the golgi apparatus membrane. The catalysed reaction is S-ubiquitinyl-[E2 ubiquitin-conjugating enzyme]-L-cysteine + [acceptor protein]-L-lysine = [E2 ubiquitin-conjugating enzyme]-L-cysteine + N(6)-ubiquitinyl-[acceptor protein]-L-lysine.. The protein operates within protein modification; protein ubiquitination. Functionally, E3 ubiquitin ligase which accepts ubiquitin and transfers it to substrates such as the beta-integrin subunit pat-3, promoting their degradation by the endoplasmic reticulum-associated degradation (ERAD) pathway which is a pathway involved in ubiquitin-dependent degradation of misfolded endoplasmic reticulum proteins. Negatively regulates the unfolded protein response to reduce endoplasmic reticulum stress. Required for the cessation of distal tip cell migration at the end of larval morphogenesis. Plays a role in germline and gonad development. The sequence is that of E3 ubiquitin ligase rnf-121 from Caenorhabditis elegans.